Consider the following 104-residue polypeptide: Small ribosomal subunit protein uS10 (104 aa).

This sequence belongs to the universal ribosomal protein uS10 family. As to quaternary structure, part of the 30S ribosomal subunit.

In terms of biological role, involved in the binding of tRNA to the ribosomes. The sequence is that of Small ribosomal subunit protein uS10 from Gloeobacter violaceus (strain ATCC 29082 / PCC 7421).